The primary structure comprises 654 residues: Marinolic acid--CoA ligase (654 aa).

Belongs to the ATP-dependent AMP-binding enzyme family.

The catalysed reaction is ATP + a marinolic acid + CoA = AMP + diphosphate + a marinoloyl-CoA.. The enzyme catalyses ATP + a pseudomonic acid + CoA = AMP + diphosphate + a pseudomonoyl-CoA.. It carries out the reaction marinolate C + ATP + CoA = marinoloyl-CoA C + AMP + diphosphate. It catalyses the reaction pseudomonate C + ATP + CoA = pseudomonoyl-CoA C + AMP + diphosphate. It functions in the pathway antibiotic biosynthesis. In terms of biological role, acyl-CoA ligase that catalyzes the CoA acylation of pseudomonate C, leading to the formation of pseudomonoyl-CoA C (PAC-CoA). Also shows high activity with pseudomonoyl-CoA A as substrate. In addition, can activate acetic, octanoic, 2,4-dodecadienoic and 2,4-decadienoic acids, although with much lower activity. In vivo, is probably involved in the biosynthesis of thiomarinol, a naturally occurring double-headed antibiotic. This chain is Marinolic acid--CoA ligase, found in Pseudoalteromonas sp. (strain SANK 73390).